Here is a 154-residue protein sequence, read N- to C-terminus: Myoglobin (154 aa).

A Globin domain is found at 2-148; that stretch reads GLSDGEWQLV…FRNDIAAKYK (147 aa). Serine 4 carries the post-translational modification Phosphoserine. Residue histidine 65 coordinates nitrite. Histidine 65 lines the O2 pocket. Residue threonine 68 is modified to Phosphothreonine. Histidine 94 serves as a coordination point for heme b.

The protein belongs to the globin family. Monomeric.

The protein localises to the cytoplasm. The protein resides in the sarcoplasm. The enzyme catalyses Fe(III)-heme b-[protein] + nitric oxide + H2O = Fe(II)-heme b-[protein] + nitrite + 2 H(+). It catalyses the reaction H2O2 + AH2 = A + 2 H2O. Its function is as follows. Monomeric heme protein which primary function is to store oxygen and facilitate its diffusion within muscle tissues. Reversibly binds oxygen through a pentacoordinated heme iron and enables its timely and efficient release as needed during periods of heightened demand. Depending on the oxidative conditions of tissues and cells, and in addition to its ability to bind oxygen, it also has a nitrite reductase activity whereby it regulates the production of bioactive nitric oxide. Under stress conditions, like hypoxia and anoxia, it also protects cells against reactive oxygen species thanks to its pseudoperoxidase activity. This Tupaia glis (Common tree shrew) protein is Myoglobin (MB).